The chain runs to 129 residues: Small ribosomal subunit protein uS11 (129 aa).

The protein belongs to the universal ribosomal protein uS11 family. As to quaternary structure, part of the 30S ribosomal subunit. Interacts with proteins S7 and S18. Binds to IF-3.

Functionally, located on the platform of the 30S subunit, it bridges several disparate RNA helices of the 16S rRNA. Forms part of the Shine-Dalgarno cleft in the 70S ribosome. This chain is Small ribosomal subunit protein uS11, found in Bradyrhizobium sp. (strain ORS 278).